The sequence spans 247 residues: DNA polymerase sliding clamp (247 aa).

The protein belongs to the PCNA family. As to quaternary structure, homotrimer. The subunits circularize to form a toroid; DNA passes through its center. Replication factor C (RFC) is required to load the toroid on the DNA.

In terms of biological role, sliding clamp subunit that acts as a moving platform for DNA processing. Responsible for tethering the catalytic subunit of DNA polymerase and other proteins to DNA during high-speed replication. The protein is DNA polymerase sliding clamp of Methanoregula boonei (strain DSM 21154 / JCM 14090 / 6A8).